The sequence spans 461 residues: Photosystem II CP43 reaction center protein (461 aa).

Positions 1-2 (ME) are excised as a propeptide. At Thr3 the chain carries N-acetylthreonine. Thr3 carries the phosphothreonine modification. The next 5 membrane-spanning stretches (helical) occupy residues 57–81 (LFEVAHFVPEKPMYEQGLILLPHLA), 122–143 (LIGPETLEESFPFFGYVWKDKN), 166–188 (KAMYFGGVYDTWAPGGGDVRVIT), 243–263 (KPFAWARRALVWSGEAYLSYS), and 279–300 (WFNNTAYPSEFYGPTGPEASQA). Glu355 provides a ligand contact to [CaMn4O5] cluster. The helical transmembrane segment at 435–459 (RARAAAAGFEKGIERETEPALSMKP) threads the bilayer.

The protein belongs to the PsbB/PsbC family. PsbC subfamily. PSII is composed of 1 copy each of membrane proteins PsbA, PsbB, PsbC, PsbD, PsbE, PsbF, PsbH, PsbI, PsbJ, PsbK, PsbL, PsbM, PsbT, PsbX, PsbY, PsbZ, Psb30/Ycf12, at least 3 peripheral proteins of the oxygen-evolving complex and a large number of cofactors. It forms dimeric complexes. Binds multiple chlorophylls and provides some of the ligands for the Ca-4Mn-5O cluster of the oxygen-evolving complex. It may also provide a ligand for a Cl- that is required for oxygen evolution. PSII binds additional chlorophylls, carotenoids and specific lipids. is required as a cofactor.

The protein resides in the plastid. Its subcellular location is the chloroplast thylakoid membrane. Its function is as follows. One of the components of the core complex of photosystem II (PSII). It binds chlorophyll and helps catalyze the primary light-induced photochemical processes of PSII. PSII is a light-driven water:plastoquinone oxidoreductase, using light energy to abstract electrons from H(2)O, generating O(2) and a proton gradient subsequently used for ATP formation. The chain is Photosystem II CP43 reaction center protein from Chlorokybus atmophyticus (Soil alga).